The following is a 163-amino-acid chain: Nucleotide-binding protein Cla_1551 (163 aa).

This sequence belongs to the YajQ family.

Functionally, nucleotide-binding protein. The protein is Nucleotide-binding protein Cla_1551 of Campylobacter lari (strain RM2100 / D67 / ATCC BAA-1060).